The sequence spans 335 residues: Mitochondrial thiamine diphosphate carrier 1 (335 aa).

The next 6 helical transmembrane spans lie at 13-29, 88-105, 127-150, 182-199, 231-247, and 304-323; these read KRAVIDASAGGVAGAIS, VPALLMVVPYTSIQFAVL, YLSYISGALAGCAATVGSYPFDLL, LYAGLSPTLIEIIPYAGL, SLSSFQLFLCGLASGTV, and GIVPSTIKAAPAGAVTFVAY. 3 Solcar repeats span residues 13–111, 124–210, and 232–329; these read KRAV…VKSF, LSPY…FKRW, and LSSF…ASDW.

This sequence belongs to the mitochondrial carrier (TC 2.A.29) family.

The protein resides in the mitochondrion inner membrane. In terms of biological role, mitochondrial transporter that mediates uptake of thiamine diphosphate (ThDP) into mitochondria. In Arabidopsis thaliana (Mouse-ear cress), this protein is Mitochondrial thiamine diphosphate carrier 1.